We begin with the raw amino-acid sequence, 331 residues long: UPF0194 membrane protein YbhG (331 aa).

Positions 1–19 (MKKPVVIGLAIAAIVAVIA) are cleaved as a signal peptide. Positions 107-208 (EEIAQAAAAV…LDLQDTTLIA (102 aa)) form a coiled coil.

It belongs to the UPF0194 family.

The protein localises to the periplasm. This Salmonella agona (strain SL483) protein is UPF0194 membrane protein YbhG.